A 294-amino-acid polypeptide reads, in one-letter code: GTPase Era (294 aa).

Positions 4 to 170 constitute an Era-type G domain; the sequence is KSGFVSVIGR…VEEIFTFLPE (167 aa). The segment at 12 to 19 is G1; sequence GRPNVGKS. 12 to 19 provides a ligand contact to GTP; that stretch reads GRPNVGKS. Positions 38 to 42 are G2; it reads QTTRN. Residues 59 to 62 form a G3 region; it reads DTPG. Residues 59–63 and 121–124 contribute to the GTP site; these read DTPGI and NKID. The interval 121–124 is G4; the sequence is NKID. The tract at residues 149–151 is G5; that stretch reads ISA. Residues 201–278 enclose the KH type-2 domain; it reads TREEVPYGVA…YLDLWVKIEK (78 aa).

Belongs to the TRAFAC class TrmE-Era-EngA-EngB-Septin-like GTPase superfamily. Era GTPase family. Monomer.

The protein localises to the cytoplasm. The protein resides in the cell inner membrane. Functionally, an essential GTPase that binds both GDP and GTP, with rapid nucleotide exchange. Plays a role in 16S rRNA processing and 30S ribosomal subunit biogenesis and possibly also in cell cycle regulation and energy metabolism. This Halothermothrix orenii (strain H 168 / OCM 544 / DSM 9562) protein is GTPase Era.